The primary structure comprises 159 residues: Phosphopantetheine adenylyltransferase (159 aa).

This sequence belongs to the eukaryotic CoaD family.

It localises to the cytoplasm. It catalyses the reaction (R)-4'-phosphopantetheine + ATP + H(+) = 3'-dephospho-CoA + diphosphate. Its pathway is cofactor biosynthesis; coenzyme A biosynthesis. Its function is as follows. Reversibly transfers an adenylyl group from ATP to 4'-phosphopantetheine, yielding dephospho-CoA (dPCoA) and pyrophosphate. The protein is Phosphopantetheine adenylyltransferase of Thermococcus gammatolerans (strain DSM 15229 / JCM 11827 / EJ3).